The chain runs to 988 residues: Transcriptional regulator of yeast form adherence 5 (988 aa).

2 C2H2-type zinc fingers span residues 7-29 and 35-59; these read YICAFCARAFTRSEHKQRHERSH and FHCLHCTSSFVRRDLLQRHCRTVHH. Positions 59 to 83 are enriched in polar residues; the sequence is HTNLNPSTLPSNKSLKNPTTNPLDL. Disordered regions lie at residues 59 to 129 and 174 to 229; these read HTNL…SSVG and SMES…SNNN. Residues 84 to 106 are compositionally biased toward low complexity; it reads SNNEGTTTTTKTGNRKNNSNKNG. Polar residues-rich tracts occupy residues 113–129 and 174–208; these read TNPNPAVSNDDNRSSVG and SMESDQHSLTTFDSPTSSLGVSMTPSGSTNSEIVL.

Its subcellular location is the nucleus. Transcription factor required for yeast cell adherence to silicone substrate. The protein is Transcriptional regulator of yeast form adherence 5 (TRY5) of Candida albicans (strain SC5314 / ATCC MYA-2876) (Yeast).